A 473-amino-acid chain; its full sequence is Glutamate--tRNA ligase (473 aa).

Residues Pro11 to Gly21 carry the 'HIGH' region motif. The short motif at Lys240–Arg244 is the 'KMSKS' region element. ATP is bound at residue Lys243.

It belongs to the class-I aminoacyl-tRNA synthetase family. Glutamate--tRNA ligase type 1 subfamily. In terms of assembly, monomer.

It localises to the cytoplasm. The enzyme catalyses tRNA(Glu) + L-glutamate + ATP = L-glutamyl-tRNA(Glu) + AMP + diphosphate. In terms of biological role, catalyzes the attachment of glutamate to tRNA(Glu) in a two-step reaction: glutamate is first activated by ATP to form Glu-AMP and then transferred to the acceptor end of tRNA(Glu). In Rhodopseudomonas palustris (strain HaA2), this protein is Glutamate--tRNA ligase.